Reading from the N-terminus, the 277-residue chain is Putative phosphoenolpyruvate synthase regulatory protein (277 aa).

Residue 152–159 (GVSRCGKT) coordinates ADP.

Belongs to the pyruvate, phosphate/water dikinase regulatory protein family. PSRP subfamily.

It catalyses the reaction [pyruvate, water dikinase] + ADP = [pyruvate, water dikinase]-phosphate + AMP + H(+). The catalysed reaction is [pyruvate, water dikinase]-phosphate + phosphate + H(+) = [pyruvate, water dikinase] + diphosphate. In terms of biological role, bifunctional serine/threonine kinase and phosphorylase involved in the regulation of the phosphoenolpyruvate synthase (PEPS) by catalyzing its phosphorylation/dephosphorylation. The sequence is that of Putative phosphoenolpyruvate synthase regulatory protein from Chromohalobacter salexigens (strain ATCC BAA-138 / DSM 3043 / CIP 106854 / NCIMB 13768 / 1H11).